The primary structure comprises 162 residues: HTH-type transcriptional regulator IscR (162 aa).

Residues 2–131 enclose the HTH rrf2-type domain; sequence RLTSKGRYAV…NNITLGELVN (130 aa). A DNA-binding region (H-T-H motif) is located at residues 28–51; sequence LADISERQGISLSYLEQLFSRLRK. Positions 92, 98, and 104 each coordinate [2Fe-2S] cluster. The tract at residues 141–162 is disordered; that stretch reads RQHNEAHRPTRAQDAIDVKLRA.

Requires [2Fe-2S] cluster as cofactor.

Regulates the transcription of several operons and genes involved in the biogenesis of Fe-S clusters and Fe-S-containing proteins. The sequence is that of HTH-type transcriptional regulator IscR from Cronobacter sakazakii (strain ATCC BAA-894) (Enterobacter sakazakii).